A 206-amino-acid polypeptide reads, in one-letter code: Orotate phosphoribosyltransferase (206 aa).

5-phospho-alpha-D-ribose 1-diphosphate contacts are provided by residues arginine 97, lysine 98, lysine 101, and 125-133 (NDVIASGRS). Orotate is bound at residue arginine 157.

This sequence belongs to the purine/pyrimidine phosphoribosyltransferase family. PyrE subfamily. As to quaternary structure, homodimer. Mg(2+) serves as cofactor.

It catalyses the reaction orotidine 5'-phosphate + diphosphate = orotate + 5-phospho-alpha-D-ribose 1-diphosphate. Its pathway is pyrimidine metabolism; UMP biosynthesis via de novo pathway; UMP from orotate: step 1/2. Catalyzes the transfer of a ribosyl phosphate group from 5-phosphoribose 1-diphosphate to orotate, leading to the formation of orotidine monophosphate (OMP). This chain is Orotate phosphoribosyltransferase, found in Chlamydia caviae (strain ATCC VR-813 / DSM 19441 / 03DC25 / GPIC) (Chlamydophila caviae).